Reading from the N-terminus, the 467-residue chain is Chromosomal replication initiator protein DnaA (467 aa).

The segment at 1 to 90 (MSLSLWQQCL…KSVTQTPQAA (90 aa)) is domain I, interacts with DnaA modulators. The segment at 91 to 130 (VTSNVAAPAQVAQTQPQRAAPSTRSGWDNVPAPAEPTYRS) is domain II. A compositionally biased stretch (low complexity) spans 97-111 (APAQVAQTQPQRAAP). Residues 97-119 (APAQVAQTQPQRAAPSTRSGWDN) form a disordered region. Residues 131 to 347 (NVNVKHTFDN…GALNRVIANA (217 aa)) are domain III, AAA+ region. ATP is bound by residues glycine 175, glycine 177, lysine 178, and threonine 179. The domain IV, binds dsDNA stretch occupies residues 348–467 (NFTGRAITID…FSNLIRTLSS (120 aa)).

Belongs to the DnaA family. Oligomerizes as a right-handed, spiral filament on DNA at oriC.

It is found in the cytoplasm. Functionally, plays an essential role in the initiation and regulation of chromosomal replication. ATP-DnaA binds to the origin of replication (oriC) to initiate formation of the DNA replication initiation complex once per cell cycle. Binds the DnaA box (a 9 base pair repeat at the origin) and separates the double-stranded (ds)DNA. Forms a right-handed helical filament on oriC DNA; dsDNA binds to the exterior of the filament while single-stranded (ss)DNA is stabiized in the filament's interior. The ATP-DnaA-oriC complex binds and stabilizes one strand of the AT-rich DNA unwinding element (DUE), permitting loading of DNA polymerase. After initiation quickly degrades to an ADP-DnaA complex that is not apt for DNA replication. Binds acidic phospholipids. The sequence is that of Chromosomal replication initiator protein DnaA from Escherichia coli O157:H7.